The primary structure comprises 147 residues: MKIVIQRVSEASVAIEGEIVGAIQKGLLLLVGFGPEDGQEDVDYAVRKITQMRIFSDAEDKMNLSLLDIKGSILSISQFTLFANTKKGNRPAFTEAAKPEMASQLYEQFNQALSAFCPLERGVFGADMKVSLVNDGPVTIILDTKNR.

The Gly-cisPro motif, important for rejection of L-amino acids signature appears at 136–137; sequence GP.

This sequence belongs to the DTD family. In terms of assembly, homodimer.

The protein resides in the cytoplasm. The catalysed reaction is glycyl-tRNA(Ala) + H2O = tRNA(Ala) + glycine + H(+). It carries out the reaction a D-aminoacyl-tRNA + H2O = a tRNA + a D-alpha-amino acid + H(+). Its function is as follows. An aminoacyl-tRNA editing enzyme that deacylates mischarged D-aminoacyl-tRNAs. Also deacylates mischarged glycyl-tRNA(Ala), protecting cells against glycine mischarging by AlaRS. Acts via tRNA-based rather than protein-based catalysis; rejects L-amino acids rather than detecting D-amino acids in the active site. By recycling D-aminoacyl-tRNA to D-amino acids and free tRNA molecules, this enzyme counteracts the toxicity associated with the formation of D-aminoacyl-tRNA entities in vivo and helps enforce protein L-homochirality. The protein is D-aminoacyl-tRNA deacylase of Streptococcus uberis (strain ATCC BAA-854 / 0140J).